Consider the following 178-residue polypeptide: Cell wall-binding protein YwsB (178 aa).

A signal peptide spans 1–30 (MNKPTKLFSTLALAAGMTAAAAGGAGTIHA). SH3b domains follow at residues 47–111 (IDSY…VKAA) and 116–178 (TKTK…HMTK).

Its subcellular location is the secreted. The protein resides in the cell wall. With respect to regulation, increases in stationary phase in a strain lacking the WprA protease. The chain is Cell wall-binding protein YwsB (ywsB) from Bacillus subtilis (strain 168).